The chain runs to 499 residues: Gamma-aminobutyric acid receptor subunit beta (499 aa).

The signal sequence occupies residues 1-23 (MWGIIVPFFSASLMCSLVAVVRC). Residues 24 to 251 (QQDTDHFANV…IFQLQRNIGY (228 aa)) lie on the Extracellular side of the membrane. Asn32, Asn98, Asn106, and Asn152 each carry an N-linked (GlcNAc...) asparagine glycan. An intrachain disulfide couples Cys167 to Cys181. 3 helical membrane-spanning segments follow: residues 252–273 (FIFQ…SFWI), 278–299 (TSAR…SNGV), and 311–333 (AIDI…YAAV). Residues 334-475 (NYTYWGARAK…RVQDVNTIDK (142 aa)) lie on the Cytoplasmic side of the membrane. The helical transmembrane segment at 476–499 (YARLMFPLLFIIFNTSYWSVYLLT) threads the bilayer.

The protein belongs to the ligand-gated ion channel (TC 1.A.9) family. Gamma-aminobutyric acid receptor (TC 1.A.9.5) subfamily. As to quaternary structure, generally pentameric. There are five types of GABA(A) receptor chains: alpha, beta, gamma, delta, and rho.

The protein resides in the postsynaptic cell membrane. The protein localises to the cell membrane. GABA, an inhibitory neurotransmitter, mediates neuronal inhibition by binding to the GABA/benzodiazepine receptor and opening an integral chloride channel. In Lymnaea stagnalis (Great pond snail), this protein is Gamma-aminobutyric acid receptor subunit beta.